Reading from the N-terminus, the 598-residue chain is MIKSYYLFFIILIFLIFINNFILCENNNNNKYNNNNNYPFINVDKIIYTNSSNSIYLVWSNEQFNLILQSSYNEEFDDIVMIGEYFDKIETTGWGELNITFNSNSATIQISDNEQAYFTGFIESVLTGERINQMYNNFAASEFTNSDHTPSPKLIDFLNTQMEFVRDQVFENNGSSQYWYSTGLIMSQFDGLVNGYQQSPFPQLSEIQLYILTSAGDLETLVTLFPSSSSSSSSTTNENKNKNIKISSIKPNFKDELTDCSGFIRILPDYSDVYFGHTTWRYYYALLRIYKFINLQFNFQDTPMEYKVSFSSSPGFISSKDDFYITGNKLAIMETTNNIYNESLYQYTIPQSVLVWQRAMIANMIATNSSDWVKIFSEFNSGTYQNQWMVFDYKLFIPNKQQSSSSLPPNTFWIAEQIPGQVKTADLTNILNEQGYWKSYNIPYFESIYNISGYSEKTDLPPSYQYSYEKCPRSLIFSRNASDVLNFEDMKSLMQFNNYKTDPLSYSSPLNSISSRGDLLTIENGNRSAVAFGGVDSKITSFNQVLTLSCTAISGPSTNGGTLPPFTWSQSPLFQNITHIGVPETFNFDWQEMGPYPN.

The first 24 residues, 1–24 (MIKSYYLFFIILIFLIFINNFILC), serve as a signal peptide directing secretion. 9 N-linked (GlcNAc...) asparagine glycosylation sites follow: asparagine 50, asparagine 98, asparagine 173, asparagine 341, asparagine 368, asparagine 450, asparagine 480, asparagine 526, and asparagine 576.

Belongs to the phospholipase B-like family.

Its subcellular location is the secreted. Its function is as follows. Probable phospholipase. In Dictyostelium discoideum (Social amoeba), this protein is Phospholipase B-like protein G (plbG).